The primary structure comprises 340 residues: MGLSVGIYGGSGYVGVELVRLLAGHPEVGSLAVASRGHAGRRIGEVYPQVAVGGEYLDPSEVDVSSLDVAFVAYGHGESAEAVRGLLEGGVRLVVDLSADFRLPDVRVYEEWYGEHPAPELLGEAHYGLPEVFGALEGRLVANPGCYPTAAILALAPVVRRMGGEVRSVTINALSGVSGAGAKPSARTHFVSVNESVSPYGVSGGEPRHRHTPEIEIMLRRLGEAPPVTFVPHLLPISRGELETITVEAGELPGAEEVLGWYREDYGGWRFVEAREEVPHISHVANTNRARLSAAVDRRAGKLLLFAAVDNLLKGAAGEAVQNMNLALGYPEDLGLEHLR.

Cys-146 is a catalytic residue.

The protein belongs to the NAGSA dehydrogenase family. Type 1 subfamily.

Its subcellular location is the cytoplasm. It carries out the reaction N-acetyl-L-glutamate 5-semialdehyde + phosphate + NADP(+) = N-acetyl-L-glutamyl 5-phosphate + NADPH + H(+). Its pathway is amino-acid biosynthesis; L-arginine biosynthesis; N(2)-acetyl-L-ornithine from L-glutamate: step 3/4. Its function is as follows. Catalyzes the NADPH-dependent reduction of N-acetyl-5-glutamyl phosphate to yield N-acetyl-L-glutamate 5-semialdehyde. This Rubrobacter xylanophilus (strain DSM 9941 / JCM 11954 / NBRC 16129 / PRD-1) protein is N-acetyl-gamma-glutamyl-phosphate reductase.